The primary structure comprises 418 residues: Tryptophan synthase beta chain 1 (418 aa).

Position 99 is an N6-(pyridoxal phosphate)lysine (K99).

It belongs to the TrpB family. As to quaternary structure, tetramer of two alpha and two beta chains. Pyridoxal 5'-phosphate serves as cofactor.

The catalysed reaction is (1S,2R)-1-C-(indol-3-yl)glycerol 3-phosphate + L-serine = D-glyceraldehyde 3-phosphate + L-tryptophan + H2O. The protein operates within amino-acid biosynthesis; L-tryptophan biosynthesis; L-tryptophan from chorismate: step 5/5. In terms of biological role, the beta subunit is responsible for the synthesis of L-tryptophan from indole and L-serine. The sequence is that of Tryptophan synthase beta chain 1 (trpB1) from Corynebacterium efficiens (strain DSM 44549 / YS-314 / AJ 12310 / JCM 11189 / NBRC 100395).